Consider the following 186-residue polypeptide: ATP synthase subunit b (186 aa).

The chain crosses the membrane as a helical span at residues I28–P48.

The protein belongs to the ATPase B chain family. In terms of assembly, F-type ATPases have 2 components, F(1) - the catalytic core - and F(0) - the membrane proton channel. F(1) has five subunits: alpha(3), beta(3), gamma(1), delta(1), epsilon(1). F(0) has three main subunits: a(1), b(2) and c(10-14). The alpha and beta chains form an alternating ring which encloses part of the gamma chain. F(1) is attached to F(0) by a central stalk formed by the gamma and epsilon chains, while a peripheral stalk is formed by the delta and b chains.

Its subcellular location is the cell membrane. Functionally, f(1)F(0) ATP synthase produces ATP from ADP in the presence of a proton or sodium gradient. F-type ATPases consist of two structural domains, F(1) containing the extramembraneous catalytic core and F(0) containing the membrane proton channel, linked together by a central stalk and a peripheral stalk. During catalysis, ATP synthesis in the catalytic domain of F(1) is coupled via a rotary mechanism of the central stalk subunits to proton translocation. Component of the F(0) channel, it forms part of the peripheral stalk, linking F(1) to F(0). This is ATP synthase subunit b from Corynebacterium urealyticum (strain ATCC 43042 / DSM 7109).